Consider the following 249-residue polypeptide: Bis(5'-nucleosyl)-tetraphosphatase PrpE [asymmetrical] (249 aa).

Belongs to the PrpE family. Ni(2+) serves as cofactor.

It catalyses the reaction P(1),P(4)-bis(5'-guanosyl) tetraphosphate + H2O = GMP + GTP + 2 H(+). Its function is as follows. Asymmetrically hydrolyzes Ap4p to yield AMP and ATP. This is Bis(5'-nucleosyl)-tetraphosphatase PrpE [asymmetrical] from Bacillus velezensis (strain DSM 23117 / BGSC 10A6 / LMG 26770 / FZB42) (Bacillus amyloliquefaciens subsp. plantarum).